Here is a 130-residue protein sequence, read N- to C-terminus: Small ribosomal subunit protein uS8 (130 aa).

The protein belongs to the universal ribosomal protein uS8 family. As to quaternary structure, part of the 30S ribosomal subunit.

One of the primary rRNA binding proteins, it binds directly to 16S rRNA central domain where it helps coordinate assembly of the platform of the 30S subunit. In Caldivirga maquilingensis (strain ATCC 700844 / DSM 13496 / JCM 10307 / IC-167), this protein is Small ribosomal subunit protein uS8.